We begin with the raw amino-acid sequence, 1058 residues long: Carbamoyl phosphate synthase large chain (1058 aa).

The tract at residues 1 to 401 (MPKRTDIQKI…SLLKACRSLE (401 aa)) is carboxyphosphate synthetic domain. ATP is bound by residues R129, R169, G175, G176, R208, I210, E215, G241, I242, H243, Q284, and E298. In terms of domain architecture, ATP-grasp 1 spans 133–327 (KQLMEELEQP…IAKLAAKIAV (195 aa)). Q284, E298, and N300 together coordinate Mg(2+). Mn(2+) contacts are provided by Q284, E298, and N300. Positions 402-546 (IGVHHNEIPE…YSTYGWENES (145 aa)) are oligomerization domain. The interval 547–929 (IRSDKESVLV…ALYKAFEASY (383 aa)) is carbamoyl phosphate synthetic domain. In terms of domain architecture, ATP-grasp 2 spans 671-861 (EQALKELDIP…MAQVATKLIL (191 aa)). R707, S746, I748, E752, G777, V778, H779, S780, Q820, and E832 together coordinate ATP. Residues Q820, E832, and N834 each contribute to the Mg(2+) site. Positions 820, 832, and 834 each coordinate Mn(2+). An MGS-like domain is found at 930-1058 (LHLPTFGNVV…ESRSFVTEAI (129 aa)). The allosteric domain stretch occupies residues 930–1058 (LHLPTFGNVV…ESRSFVTEAI (129 aa)).

Belongs to the CarB family. As to quaternary structure, composed of two chains; the small (or glutamine) chain promotes the hydrolysis of glutamine to ammonia, which is used by the large (or ammonia) chain to synthesize carbamoyl phosphate. Tetramer of heterodimers (alpha,beta)4. Requires Mg(2+) as cofactor. Mn(2+) is required as a cofactor.

It catalyses the reaction hydrogencarbonate + L-glutamine + 2 ATP + H2O = carbamoyl phosphate + L-glutamate + 2 ADP + phosphate + 2 H(+). It carries out the reaction hydrogencarbonate + NH4(+) + 2 ATP = carbamoyl phosphate + 2 ADP + phosphate + 2 H(+). It functions in the pathway amino-acid biosynthesis; L-arginine biosynthesis; carbamoyl phosphate from bicarbonate: step 1/1. The protein operates within pyrimidine metabolism; UMP biosynthesis via de novo pathway; (S)-dihydroorotate from bicarbonate: step 1/3. Large subunit of the glutamine-dependent carbamoyl phosphate synthetase (CPSase). CPSase catalyzes the formation of carbamoyl phosphate from the ammonia moiety of glutamine, carbonate, and phosphate donated by ATP, constituting the first step of 2 biosynthetic pathways, one leading to arginine and/or urea and the other to pyrimidine nucleotides. The large subunit (synthetase) binds the substrates ammonia (free or transferred from glutamine from the small subunit), hydrogencarbonate and ATP and carries out an ATP-coupled ligase reaction, activating hydrogencarbonate by forming carboxy phosphate which reacts with ammonia to form carbamoyl phosphate. In Streptococcus pneumoniae serotype 19F (strain G54), this protein is Carbamoyl phosphate synthase large chain.